Reading from the N-terminus, the 265-residue chain is Beta-lactamase OXA-48 (265 aa).

Positions 1–22 (MRVLALSAVFLVASIIGMPAVA) are cleaved as a signal peptide. Residue serine 70 is the Acyl-ester intermediate of the active site. Residues serine 70, lysine 73, serine 118, and arginine 250 each contribute to the a beta-lactam site. Position 73 is an N6-carboxylysine (lysine 73).

This sequence belongs to the class-D beta-lactamase family. As to quaternary structure, monomer. Dimer. Carboxylated on the epsilon-amino group of a lysine, with the resulting carbamate functional group serving as a general base. Probably N-carboxylated at Lys-73 at neutral pH in vivo and undergoes complete N-decarboxylation, at pH 4.1, in vitro.

The enzyme catalyses a beta-lactam + H2O = a substituted beta-amino acid. Its activity is regulated as follows. Inhibited by avibactam, related diazabicyclooctane (DBO) derivatives and by bicyclic boronic acids, via a covalent binding to Ser-70. Inhibited by chloride, bromide and iodide ions. Not inhibited by the beta-lactamase-blocking agents, clavulanic acid or tazobactam. Its function is as follows. Class D beta-lactamase which confers resistance to the beta-lactam antibiotics, including amoxicillin, and moderate resistance to cephalosporins and carbapenems such as cephalothin and imipenem; in the DH10B strain of E.coli. Acts via hydrolysis of the beta-lactam ring. Has oxacillin-, cephalothin- and imipenem-hydrolyzing activities. The polypeptide is Beta-lactamase OXA-48 (Klebsiella pneumoniae).